A 107-amino-acid chain; its full sequence is MRGGMGNMQKMMKQMQKMQKDMAKAQEELAEKVVEGTAGGGMVTVKANGQKEILDVIIKEEVVDPEDIDMLQDLVLAATNEALKKVDEITNETMGQFTKGMNMPGLF.

The interval 1 to 24 (MRGGMGNMQKMMKQMQKMQKDMAK) is disordered. Low complexity predominate over residues 8–17 (MQKMMKQMQK).

It belongs to the YbaB/EbfC family. As to quaternary structure, homodimer.

The protein resides in the cytoplasm. It is found in the nucleoid. Functionally, binds to DNA and alters its conformation. May be involved in regulation of gene expression, nucleoid organization and DNA protection. This is Nucleoid-associated protein YaaK (yaaK) from Bacillus subtilis (strain 168).